A 279-amino-acid polypeptide reads, in one-letter code: MKISNLLGVLVVFLAVVKGQKKDEGSDDSELLALVTVPDGPVIFSIEQVEQVAAPSTDKHLSKLKPKIAYDKVEPFEMAQPSESTITEKAAIKFRPKLYIANGCHAYPAVNKAGQISKGMKTADPTFATCGKPSKGTQVYGRSAWFGTVWAIMYAWYFPDIPLDWEYAIVWTNNPNVSNPVILGVTVSNSEGSTTSQTPPDPAMVDGRSVKIAYNNKGLESSTTLGGTQNLVMWHQLTVEAQEALNKKASFNGVQVPMNDNHFLRNLEASWPFSKEYLQ.

Residues 1–19 (MKISNLLGVLVVFLAVVKG) form the signal peptide. Residues 151-161 (AIMYAWYFPDI) carry the Conserved undecapeptide motif motif. Asparagine 176 carries N-linked (GlcNAc...) asparagine glycosylation.

It belongs to the Necrosis inducing protein (NPP1) family.

Its subcellular location is the secreted. In terms of biological role, secreted effector that acts as a pathogen-associated molecular pattern (PAMP) recognized by the plant immune system. Seems not to induce necrosis in Nicotiana benthamiana leaves. The sequence is that of NLP effector protein 9 from Plasmopara viticola (Downy mildew of grapevine).